A 25-amino-acid polypeptide reads, in one-letter code: Kappa-conotoxin RIIIJ (25 aa).

Pro2, Pro3, Pro7, Pro8, Pro13, Pro15, and Pro21 each carry 4-hydroxyproline. Cystine bridges form between Cys4-Cys17, Cys5-Cys22, and Cys12-Cys23.

It belongs to the conotoxin M superfamily. In terms of tissue distribution, expressed by the venom duct.

The protein localises to the secreted. Its function is as follows. Kappa-conotoxins inhibits voltage-gated potassium channels. This toxin dose-dependently and reversibly inhibits the Kv1.2/KCNA2 channel in mammalia. Does not exert protective effect on cardiac tissue when administered after an ischemic event. This is Kappa-conotoxin RIIIJ from Conus radiatus (Rayed cone).